The sequence spans 26 residues: Halocyntin (26 aa).

Functionally, has strong antibacterial activity against the Gram-positive bacteria M.luteus, S.aureus, B.megaterium, A.viridans and E.faecalis, and against the Gram-negative bacterium K.pneumoniae. Has less potent antibacterial activity against the Gram-negative bacteria E.coli DH5alpha, S.typhimurium, P.aeruginosa, E.aerogenes and N.gonorrhoeae. Has moderate hemolytic activity against sheep erythrocytes. The protein is Halocyntin of Halocynthia papillosa (Red sea-squirt).